Reading from the N-terminus, the 290-residue chain is Translin-associated protein X (290 aa).

A disordered region spans residues 1–31; it reads MNGKEGPGGFRKRKHDTFPHNQRREGKDASL. Residues 16–28 show a composition bias toward basic and acidic residues; sequence DTFPHNQRREGKD. The segment at 73 to 208 is interaction with C1D; it reads LLHRITSAPD…MRMCINSVGN (136 aa). 2 residues coordinate Mg(2+): Glu-129 and Glu-197. Lys-279 is covalently cross-linked (Glycyl lysine isopeptide (Lys-Gly) (interchain with G-Cter in SUMO2)).

It belongs to the translin family. As to quaternary structure, ring-shaped heterooctamer of six TSN and two TSNAX subunits. Interacts with GOLGA3, TSNAXIP1, SUN1 and AKAP9. Interacts with the homodimeric form of C1D following gamma-radiation. Interacts with TSN and C1D in a mutually exclusive manner. Sumoylated with SUMO1. As to expression, detected in heart, brain, lung, liver, kidney and testis.

It is found in the cytoplasm. The protein resides in the perinuclear region. The protein localises to the golgi apparatus. Its subcellular location is the nucleus. Functionally, acts in combination with TSN as an endonuclease involved in the activation of the RNA-induced silencing complex (RISC). Possible role in spermatogenesis. This Mus musculus (Mouse) protein is Translin-associated protein X (Tsnax).